Reading from the N-terminus, the 237-residue chain is Purine nucleoside phosphorylase DeoD-type (237 aa).

H4 contacts a purine D-ribonucleoside. Phosphate-binding positions include G20, R24, R43, and 87 to 90 (RVGT). A purine D-ribonucleoside contacts are provided by residues 179 to 181 (EME) and 203 to 204 (SD). The Proton donor role is filled by D204.

It belongs to the PNP/UDP phosphorylase family. In terms of assembly, homohexamer; trimer of homodimers.

It carries out the reaction a purine D-ribonucleoside + phosphate = a purine nucleobase + alpha-D-ribose 1-phosphate. The enzyme catalyses a purine 2'-deoxy-D-ribonucleoside + phosphate = a purine nucleobase + 2-deoxy-alpha-D-ribose 1-phosphate. Catalyzes the reversible phosphorolytic breakdown of the N-glycosidic bond in the beta-(deoxy)ribonucleoside molecules, with the formation of the corresponding free purine bases and pentose-1-phosphate. This Exiguobacterium sp. (strain ATCC BAA-1283 / AT1b) protein is Purine nucleoside phosphorylase DeoD-type.